Here is a 345-residue protein sequence, read N- to C-terminus: Fe-S cluster assembly protein DRE2 (345 aa).

An N-terminal SAM-like domain region spans residues 29–163; the sequence is GDSGDRTLLL…KPDYAEQEVV (135 aa). The segment at 164 to 237 is linker; it reads PLRFGAKKVN…EDTLLTEADL (74 aa). [2Fe-2S] cluster is bound by residues C247, C258, C261, and C263. The interval 247–263 is fe-S binding site A; that stretch reads CAPQPGKKRRACKDCTC. [4Fe-4S] cluster contacts are provided by C308, C311, C319, and C322. Short sequence motifs (cx2C motif) lie at residues 308-311 and 319-322; these read CNSC and CADC. Positions 308 to 322 are fe-S binding site B; it reads CNSCYLGDAFRCADC.

This sequence belongs to the anamorsin family. Monomer. Interacts with TAH18. Interacts with MIA40. [2Fe-2S] cluster is required as a cofactor. Requires [4Fe-4S] cluster as cofactor.

Its subcellular location is the cytoplasm. The protein resides in the mitochondrion intermembrane space. Component of the cytosolic iron-sulfur (Fe-S) protein assembly (CIA) machinery required for the maturation of extramitochondrial Fe-S proteins. Part of an electron transfer chain functioning in an early step of cytosolic Fe-S biogenesis, facilitating the de novo assembly of a [4Fe-4S] cluster on the scaffold complex CFD1-NBP35. Electrons are transferred to DRE2 from NADPH via the FAD- and FMN-containing protein TAH18. TAH18-DRE2 are also required for the assembly of the diferric tyrosyl radical cofactor of ribonucleotide reductase (RNR), probably by providing electrons for reduction during radical cofactor maturation in the catalytic small subunit RNR2. The sequence is that of Fe-S cluster assembly protein DRE2 from Podospora anserina (strain S / ATCC MYA-4624 / DSM 980 / FGSC 10383) (Pleurage anserina).